A 438-amino-acid chain; its full sequence is Cysteine--tRNA ligase (438 aa).

Position 28 (Cys28) interacts with Zn(2+). The 'HIGH' region signature appears at 30 to 40 (PTVYNHLHLGN). Residues Cys207, His232, and Glu236 each coordinate Zn(2+). The 'KMSKS' region signature appears at 264 to 268 (KMSKS). Lys267 lines the ATP pocket.

The protein belongs to the class-I aminoacyl-tRNA synthetase family. In terms of assembly, monomer. Zn(2+) serves as cofactor.

The protein localises to the cytoplasm. The enzyme catalyses tRNA(Cys) + L-cysteine + ATP = L-cysteinyl-tRNA(Cys) + AMP + diphosphate. This Aster yellows witches'-broom phytoplasma (strain AYWB) protein is Cysteine--tRNA ligase.